A 174-amino-acid polypeptide reads, in one-letter code: Crossover junction endodeoxyribonuclease RuvC (174 aa).

Catalysis depends on residues aspartate 8, glutamate 67, and aspartate 139. Mg(2+) contacts are provided by aspartate 8, glutamate 67, and aspartate 139.

It belongs to the RuvC family. Homodimer which binds Holliday junction (HJ) DNA. The HJ becomes 2-fold symmetrical on binding to RuvC with unstacked arms; it has a different conformation from HJ DNA in complex with RuvA. In the full resolvosome a probable DNA-RuvA(4)-RuvB(12)-RuvC(2) complex forms which resolves the HJ. The cofactor is Mg(2+).

It is found in the cytoplasm. It carries out the reaction Endonucleolytic cleavage at a junction such as a reciprocal single-stranded crossover between two homologous DNA duplexes (Holliday junction).. Functionally, the RuvA-RuvB-RuvC complex processes Holliday junction (HJ) DNA during genetic recombination and DNA repair. Endonuclease that resolves HJ intermediates. Cleaves cruciform DNA by making single-stranded nicks across the HJ at symmetrical positions within the homologous arms, yielding a 5'-phosphate and a 3'-hydroxyl group; requires a central core of homology in the junction. The consensus cleavage sequence is 5'-(A/T)TT(C/G)-3'. Cleavage occurs on the 3'-side of the TT dinucleotide at the point of strand exchange. HJ branch migration catalyzed by RuvA-RuvB allows RuvC to scan DNA until it finds its consensus sequence, where it cleaves and resolves the cruciform DNA. This is Crossover junction endodeoxyribonuclease RuvC from Pseudomonas paraeruginosa (strain DSM 24068 / PA7) (Pseudomonas aeruginosa (strain PA7)).